The sequence spans 353 residues: Nicotinate-nucleotide--dimethylbenzimidazole phosphoribosyltransferase (353 aa).

E319 (proton acceptor) is an active-site residue.

It belongs to the CobT family.

It catalyses the reaction 5,6-dimethylbenzimidazole + nicotinate beta-D-ribonucleotide = alpha-ribazole 5'-phosphate + nicotinate + H(+). The protein operates within nucleoside biosynthesis; alpha-ribazole biosynthesis; alpha-ribazole from 5,6-dimethylbenzimidazole: step 1/2. Catalyzes the synthesis of alpha-ribazole-5'-phosphate from nicotinate mononucleotide (NAMN) and 5,6-dimethylbenzimidazole (DMB). In Chlorobaculum parvum (strain DSM 263 / NCIMB 8327) (Chlorobium vibrioforme subsp. thiosulfatophilum), this protein is Nicotinate-nucleotide--dimethylbenzimidazole phosphoribosyltransferase.